The chain runs to 481 residues: UDP-N-acetylmuramoyl-L-alanyl-D-glutamate--L-lysine ligase (481 aa).

S42 is a binding site for UDP-N-acetyl-alpha-D-muramoyl-L-alanyl-D-glutamate. ATP is bound at residue 118–124 (GTKGKTT). Residues Q158, 160-161 (TT), S187, and R195 contribute to the UDP-N-acetyl-alpha-D-muramoyl-L-alanyl-D-glutamate site. An N6-carboxylysine modification is found at K229. The L-lysine recognition motif signature appears at 404-407 (DDPN).

This sequence belongs to the MurCDEF family. MurE subfamily. In terms of processing, carboxylation is probably crucial for Mg(2+) binding and, consequently, for the gamma-phosphate positioning of ATP.

The protein resides in the cytoplasm. The catalysed reaction is UDP-N-acetyl-alpha-D-muramoyl-L-alanyl-D-glutamate + L-lysine + ATP = UDP-N-acetyl-alpha-D-muramoyl-L-alanyl-gamma-D-glutamyl-L-lysine + ADP + phosphate + H(+). The protein operates within cell wall biogenesis; peptidoglycan biosynthesis. In terms of biological role, catalyzes the addition of L-lysine to the nucleotide precursor UDP-N-acetylmuramoyl-L-alanyl-D-glutamate (UMAG) in the biosynthesis of bacterial cell-wall peptidoglycan. The protein is UDP-N-acetylmuramoyl-L-alanyl-D-glutamate--L-lysine ligase of Streptococcus pyogenes serotype M3 (strain SSI-1).